The chain runs to 168 residues: Protein-export protein SecB (168 aa).

The segment at 1–21 (MADQPSGNNDAKQAETNGNTV) is disordered.

It belongs to the SecB family. As to quaternary structure, homotetramer, a dimer of dimers. One homotetramer interacts with 1 SecA dimer.

The protein resides in the cytoplasm. One of the proteins required for the normal export of preproteins out of the cell cytoplasm. It is a molecular chaperone that binds to a subset of precursor proteins, maintaining them in a translocation-competent state. It also specifically binds to its receptor SecA. This Chelativorans sp. (strain BNC1) protein is Protein-export protein SecB.